We begin with the raw amino-acid sequence, 350 residues long: Alcohol dehydrogenase 1 (350 aa).

The Zn(2+) site is built by Cys46, His69, Cys100, Cys103, Cys106, Cys114, and Cys156. Residues 180–186 (GAAGGLG), Asp204, Lys209, 271–273 (VGL), and Arg343 each bind NAD(+).

This sequence belongs to the zinc-containing alcohol dehydrogenase family. In terms of assembly, homotetramer. The cofactor is Zn(2+).

The protein resides in the cytoplasm. The enzyme catalyses a primary alcohol + NAD(+) = an aldehyde + NADH + H(+). It catalyses the reaction a secondary alcohol + NAD(+) = a ketone + NADH + H(+). The chain is Alcohol dehydrogenase 1 (ADH1) from Kluyveromyces lactis (strain ATCC 8585 / CBS 2359 / DSM 70799 / NBRC 1267 / NRRL Y-1140 / WM37) (Yeast).